Here is a 296-residue protein sequence, read N- to C-terminus: uncharacterized protein (296 aa).

It is found in the mitochondrion. This is an uncharacterized protein from Podospora anserina (strain S / ATCC MYA-4624 / DSM 980 / FGSC 10383) (Pleurage anserina).